A 511-amino-acid polypeptide reads, in one-letter code: GMP synthase [glutamine-hydrolyzing] (511 aa).

A Glutamine amidotransferase type-1 domain is found at 5 to 195; sequence DIIVLDFGSQ…AKYICDCEST (191 aa). Cys-82 (nucleophile) is an active-site residue. Catalysis depends on residues His-169 and Glu-171. One can recognise a GMPS ATP-PPase domain in the interval 196 to 386; sequence WNMGNFAKIK…LGLSPDLVYR (191 aa). 223 to 229 lines the ATP pocket; it reads SGGVDSS.

In terms of assembly, homodimer.

It catalyses the reaction XMP + L-glutamine + ATP + H2O = GMP + L-glutamate + AMP + diphosphate + 2 H(+). It functions in the pathway purine metabolism; GMP biosynthesis; GMP from XMP (L-Gln route): step 1/1. Its function is as follows. Catalyzes the synthesis of GMP from XMP. The chain is GMP synthase [glutamine-hydrolyzing] from Campylobacter hominis (strain ATCC BAA-381 / DSM 21671 / CCUG 45161 / LMG 19568 / NCTC 13146 / CH001A).